Reading from the N-terminus, the 191-residue chain is Adenylate kinase (191 aa).

Residue 10–15 participates in ATP binding; it reads AAGKGT. Positions 30-59 are NMP; sequence STGDMLRAAIASGSELGQRVKGVLDRGELV. Residues Thr-31, Arg-36, 57–59, 85–88, and Gln-92 contribute to the AMP site; these read ELV and GFPR. The segment at 126–136 is LID; sequence KRFEEQGRPDD. Arg-127 lines the ATP pocket. 2 residues coordinate AMP: Arg-133 and Arg-144. Gly-172 contributes to the ATP binding site.

This sequence belongs to the adenylate kinase family. As to quaternary structure, monomer.

It is found in the cytoplasm. The catalysed reaction is AMP + ATP = 2 ADP. It functions in the pathway purine metabolism; AMP biosynthesis via salvage pathway; AMP from ADP: step 1/1. Functionally, catalyzes the reversible transfer of the terminal phosphate group between ATP and AMP. Plays an important role in cellular energy homeostasis and in adenine nucleotide metabolism. This is Adenylate kinase from Caulobacter vibrioides (strain ATCC 19089 / CIP 103742 / CB 15) (Caulobacter crescentus).